We begin with the raw amino-acid sequence, 1393 residues long: DNA-directed RNA polymerase subunit beta'' (1393 aa).

The Zn(2+) site is built by Cys220, Cys291, Cys298, and Cys301.

This sequence belongs to the RNA polymerase beta' chain family. RpoC2 subfamily. In plastids the minimal PEP RNA polymerase catalytic core is composed of four subunits: alpha, beta, beta', and beta''. When a (nuclear-encoded) sigma factor is associated with the core the holoenzyme is formed, which can initiate transcription. Requires Zn(2+) as cofactor.

The protein resides in the plastid. Its subcellular location is the chloroplast. The enzyme catalyses RNA(n) + a ribonucleoside 5'-triphosphate = RNA(n+1) + diphosphate. Functionally, DNA-dependent RNA polymerase catalyzes the transcription of DNA into RNA using the four ribonucleoside triphosphates as substrates. The chain is DNA-directed RNA polymerase subunit beta'' from Gossypium hirsutum (Upland cotton).